A 259-amino-acid chain; its full sequence is 3-hydroxypropionyl-coenzyme A dehydratase (259 aa).

Residue E113 is the Nucleophile of the active site. E133 functions as the Proton acceptor in the catalytic mechanism.

It belongs to the enoyl-CoA hydratase/isomerase family. Monomer.

It carries out the reaction 3-hydroxypropanoyl-CoA = acryloyl-CoA + H2O. In terms of biological role, plays a role in autotrophic carbon fixation via the 3-hydroxypropionate/4-hydroxybutyrate cycle. Catalyzes the reversible dehydration of 3-hydroxypropionyl-CoA to form acryloyl-CoA, and the reversible dehydration of (S)-3-hydroxybutyryl-CoA to form crotonyl-CoA. Inactive towards (R)-3-hydroxybutyryl-CoA. The protein is 3-hydroxypropionyl-coenzyme A dehydratase of Metallosphaera sedula (strain ATCC 51363 / DSM 5348 / JCM 9185 / NBRC 15509 / TH2).